An 898-amino-acid chain; its full sequence is DNA damage-induced apoptosis suppressor protein (898 aa).

Disordered regions lie at residues 191–210 (CGSQEHSSQSLTSDDSDSDL), 643–670 (SINTSKEMPYRPSNNNLTPSSSGDHEGS), and 710–749 (YPINENRGQPSQKPSLQSISPSRYSRPRSQSDSECDFEES). Composition is skewed to polar residues over residues 643–664 (SINTSKEMPYRPSNNNLTPSSS) and 710–725 (YPINENRGQPSQKPSL). Low complexity predominate over residues 726–741 (QSISPSRYSRPRSQSD).

In terms of tissue distribution, highly expressed in the testis, spleen and heart. Expressed at high levels in the primary spermatocytes and to a lesser extent in the round spermatids. Also found in the bone marrow, brain, lung, kidney and liver.

It localises to the cytoplasm. The protein resides in the nucleus. May be an anti-apoptotic protein involved in DNA repair or cell survival. This Mus musculus (Mouse) protein is DNA damage-induced apoptosis suppressor protein (Ddias).